The primary structure comprises 90 residues: Acylphosphatase (90 aa).

The 86-residue stretch at 5 to 90 (CVKASVKGIV…WRHIDGFEIK (86 aa)) folds into the Acylphosphatase-like domain. Residues arginine 20 and asparagine 38 contribute to the active site.

It belongs to the acylphosphatase family.

The catalysed reaction is an acyl phosphate + H2O = a carboxylate + phosphate + H(+). This is Acylphosphatase (acyP) from Photobacterium profundum (strain SS9).